A 773-amino-acid chain; its full sequence is Lon protease homolog 2, peroxisomal (773 aa).

A Lon N-terminal domain is found at 9 to 198; it reads LPVILVTSGV…MCIKWMNEKK (190 aa). 336–343 lines the ATP pocket; sequence GPPGIGKT. The Lon proteolytic domain occupies 587 to 766; that stretch reads PLPAGVCFGL…EDVIGAMMDK (180 aa). Active-site residues include serine 672 and lysine 715. The Microbody targeting signal motif lies at 771–773; it reads AKL.

This sequence belongs to the peptidase S16 family.

The protein resides in the peroxisome matrix. The catalysed reaction is Hydrolysis of proteins in presence of ATP.. ATP-dependent serine protease that mediates the selective degradation of misfolded and unassembled polypeptides in the peroxisomal matrix. Necessary for type 2 peroxisome targeting signal (PTS2)-containing protein processing and facilitates peroxisome matrix protein import. The sequence is that of Lon protease homolog 2, peroxisomal from Caenorhabditis elegans.